The sequence spans 109 residues: Small ribosomal subunit protein bS6 (109 aa).

This sequence belongs to the bacterial ribosomal protein bS6 family.

Binds together with bS18 to 16S ribosomal RNA. In Ehrlichia canis (strain Jake), this protein is Small ribosomal subunit protein bS6.